Reading from the N-terminus, the 74-residue chain is DNA gyrase inhibitor YacG (74 aa).

C7, C10, C26, and C30 together coordinate Zn(2+).

The protein belongs to the DNA gyrase inhibitor YacG family. As to quaternary structure, interacts with GyrB. It depends on Zn(2+) as a cofactor.

In terms of biological role, inhibits all the catalytic activities of DNA gyrase by preventing its interaction with DNA. Acts by binding directly to the C-terminal domain of GyrB, which probably disrupts DNA binding by the gyrase. The sequence is that of DNA gyrase inhibitor YacG from Shewanella denitrificans (strain OS217 / ATCC BAA-1090 / DSM 15013).